The following is a 364-amino-acid chain: tRNA N6-adenosine threonylcarbamoyltransferase (364 aa).

The Fe cation site is built by H115 and H119. Substrate contacts are provided by residues 137–141, D170, G183, and N288; that span reads LVSGG. D316 is a binding site for Fe cation. The segment at 341 to 364 is disordered; the sequence is PRSRWPLDEKSAPLIGTGRRGTKA.

The protein belongs to the KAE1 / TsaD family. Fe(2+) serves as cofactor.

The protein localises to the cytoplasm. It carries out the reaction L-threonylcarbamoyladenylate + adenosine(37) in tRNA = N(6)-L-threonylcarbamoyladenosine(37) in tRNA + AMP + H(+). Functionally, required for the formation of a threonylcarbamoyl group on adenosine at position 37 (t(6)A37) in tRNAs that read codons beginning with adenine. Is involved in the transfer of the threonylcarbamoyl moiety of threonylcarbamoyl-AMP (TC-AMP) to the N6 group of A37, together with TsaE and TsaB. TsaD likely plays a direct catalytic role in this reaction. This chain is tRNA N6-adenosine threonylcarbamoyltransferase, found in Bartonella henselae (strain ATCC 49882 / DSM 28221 / CCUG 30454 / Houston 1) (Rochalimaea henselae).